A 140-amino-acid polypeptide reads, in one-letter code: Small ribosomal subunit protein eS12 (140 aa).

This sequence belongs to the eukaryotic ribosomal protein eS12 family. In terms of assembly, part of the small subunit (SSU) processome, composed of more than 70 proteins and the RNA chaperone small nucleolar RNA (snoRNA) U3. Subunit of the 40S ribosomal complex.

It is found in the nucleus. It localises to the nucleolus. Part of the small subunit (SSU) processome, first precursor of the small eukaryotic ribosomal subunit. During the assembly of the SSU processome in the nucleolus, many ribosome biogenesis factors, an RNA chaperone and ribosomal proteins associate with the nascent pre-rRNA and work in concert to generate RNA folding, modifications, rearrangements and cleavage as well as targeted degradation of pre-ribosomal RNA by the RNA exosome. Subunit of the 40S ribosomal complex. Involved in cold-warm shock-induced translocation of the RNA exosome components from the nucleolus to nucleoplasm. The protein is Small ribosomal subunit protein eS12 (rps-12) of Caenorhabditis elegans.